The primary structure comprises 247 residues: Chaperone protein NfaE (247 aa).

Positions 1 to 29 (MKMRAVAVFTGMLTGVLSVTGLLSAGAYA) are cleaved as a signal peptide. Positions 106-125 (GQQSSRRRSVSTGGEFPSDR) are disordered.

This sequence belongs to the periplasmic pilus chaperone family.

It localises to the periplasm. Functionally, involved in the biogenesis of the NFA-I adhesin. The protein is Chaperone protein NfaE (nfaE) of Escherichia coli.